Reading from the N-terminus, the 299-residue chain is tRNA dimethylallyltransferase (299 aa).

Residue 13-20 coordinates ATP; that stretch reads GPTASGKT. 15–20 provides a ligand contact to substrate; sequence TASGKT. An interaction with substrate tRNA region spans residues 38-41; that stretch reads DSRQ.

This sequence belongs to the IPP transferase family. In terms of assembly, monomer. Mg(2+) serves as cofactor.

The catalysed reaction is adenosine(37) in tRNA + dimethylallyl diphosphate = N(6)-dimethylallyladenosine(37) in tRNA + diphosphate. Its function is as follows. Catalyzes the transfer of a dimethylallyl group onto the adenine at position 37 in tRNAs that read codons beginning with uridine, leading to the formation of N6-(dimethylallyl)adenosine (i(6)A). This Synechococcus sp. (strain CC9605) protein is tRNA dimethylallyltransferase.